Here is a 557-residue protein sequence, read N- to C-terminus: Cytochrome P450 monooxygenase FSL4 (557 aa).

A run of 2 helical transmembrane segments spans residues 6-26 (LWLV…IFLL) and 32-52 (IVVC…YWTV). N-linked (GlcNAc...) asparagine glycans are attached at residues N127 and N393. C494 lines the heme pocket.

This sequence belongs to the cytochrome P450 family. The cofactor is heme.

It localises to the membrane. It participates in secondary metabolite biosynthesis. Its function is as follows. Cytochrome P450 monooxygenase; part of the gene cluster that mediates the biosynthesis of fusarielins F, G and H, decaketide compounds with 5 methylations and a decaline core that act as mycoestrogens as they stimulate growth of MCF-7 breast cancer cells. The initial compound in the pathway is produced by the reducing polyketide synthase FSL1. FSL1 lacks an active enoyl reductase (ER) domain and biosynthesis of fusarielins relies on the trans-acting enoyl reductase FSL5, before it is released through hydrolysis catalyzed by the thioesterase FSL2. Fusarielins F, G, and H have a C11=C12 cis double bond and is fully reduced between C10 and C11 and between C12 and C13. FSL3 can be involved in the formation of the C11=C12 cis double bond by moving a hypothetical C10=C11 or C12=C13 trans double bond to form prefusarielin. Prefusarielin is oxygenated at C15 and C16 by FSL4, resulting in fusarielin F, which subsequently is epoxidized into fusarielin G by the same enzyme. The final step in the pathway is a reduction of the carboxylic acid moiety to yield fusarielin H via a still undetermined mechanism. The polypeptide is Cytochrome P450 monooxygenase FSL4 (Gibberella zeae (strain ATCC MYA-4620 / CBS 123657 / FGSC 9075 / NRRL 31084 / PH-1) (Wheat head blight fungus)).